We begin with the raw amino-acid sequence, 275 residues long: Formamidopyrimidine-DNA glycosylase (275 aa).

Catalysis depends on proline 2, which acts as the Schiff-base intermediate with DNA. Glutamate 3 functions as the Proton donor in the catalytic mechanism. Catalysis depends on lysine 58, which acts as the Proton donor; for beta-elimination activity. DNA-binding residues include histidine 91 and arginine 110. The FPG-type zinc finger occupies 238 to 272; it reads QVYGQTGKPCPRCGQAIVKLKVGGRGTHICPKCQK. The Proton donor; for delta-elimination activity role is filled by arginine 262.

It belongs to the FPG family. Monomer. The cofactor is Zn(2+).

The enzyme catalyses Hydrolysis of DNA containing ring-opened 7-methylguanine residues, releasing 2,6-diamino-4-hydroxy-5-(N-methyl)formamidopyrimidine.. It carries out the reaction 2'-deoxyribonucleotide-(2'-deoxyribose 5'-phosphate)-2'-deoxyribonucleotide-DNA = a 3'-end 2'-deoxyribonucleotide-(2,3-dehydro-2,3-deoxyribose 5'-phosphate)-DNA + a 5'-end 5'-phospho-2'-deoxyribonucleoside-DNA + H(+). In terms of biological role, involved in base excision repair of DNA damaged by oxidation or by mutagenic agents. Acts as a DNA glycosylase that recognizes and removes damaged bases. Has a preference for oxidized purines, such as 7,8-dihydro-8-oxoguanine (8-oxoG). Has AP (apurinic/apyrimidinic) lyase activity and introduces nicks in the DNA strand. Cleaves the DNA backbone by beta-delta elimination to generate a single-strand break at the site of the removed base with both 3'- and 5'-phosphates. The chain is Formamidopyrimidine-DNA glycosylase from Streptococcus pyogenes serotype M18 (strain MGAS8232).